The sequence spans 486 residues: UDP-N-acetylmuramate--L-alanine ligase (486 aa).

126 to 132 (GTHGKTS) is a binding site for ATP.

It belongs to the MurCDEF family.

Its subcellular location is the cytoplasm. It carries out the reaction UDP-N-acetyl-alpha-D-muramate + L-alanine + ATP = UDP-N-acetyl-alpha-D-muramoyl-L-alanine + ADP + phosphate + H(+). It functions in the pathway cell wall biogenesis; peptidoglycan biosynthesis. In terms of biological role, cell wall formation. The protein is UDP-N-acetylmuramate--L-alanine ligase of Buchnera aphidicola subsp. Baizongia pistaciae (strain Bp).